A 1148-amino-acid polypeptide reads, in one-letter code: Ice nucleation protein (1148 aa).

Disordered stretches follow at residues 110 to 131 (ADPASTSTSTSTSTLTPMPTAI), 222 to 256 (YGSTQTSGEDSSLTAGYGSTQTAQEGSNLTAGYGS), and 367 to 394 (GSTQTSGSDSSLTAGYGSTQTAQEGSNL). Low complexity predominate over residues 114 to 128 (STSTSTSTSTLTPMP). Residues 180-1099 (ATYGSTLSGD…LSAGEDSTLI (920 aa)) are octapeptide periodicity. Residues 230–250 (EDSSLTAGYGSTQTAQEGSNL) show a composition bias toward polar residues.

This sequence belongs to the bacterial ice nucleation protein family.

The protein resides in the cell outer membrane. In terms of biological role, ice nucleation proteins enable bacteria to nucleate crystallization in supercooled water. In Pseudomonas syringae, this protein is Ice nucleation protein (inaK).